The sequence spans 182 residues: Small heat shock protein hspG1 (182 aa).

In terms of domain architecture, sHSP spans 43 to 182 (IKRIDIIPSM…SNSSFKININ (140 aa)).

This sequence belongs to the small heat shock protein (HSP20) family.

This is Small heat shock protein hspG1 (hspG1) from Dictyostelium discoideum (Social amoeba).